We begin with the raw amino-acid sequence, 1135 residues long: Envelopment polyprotein (1135 aa).

The N-terminal stretch at 1 to 18 is a signal peptide; that stretch reads MIMWGLLLTMILIDFGAS. At 19–495 the chain is on the lumenal side; the sequence is LRNVYDMKIE…ALLTTFCFGW (477 aa). 11 disulfide bridges follow: Cys29–Cys151, Cys63–Cys157, Cys109–Cys128, Cys133–Cys138, Cys175–Cys185, Cys210–Cys247, Cys234–Cys351, Cys376–Cys435, Cys380–Cys389, Cys405–Cys424, and Cys452–Cys475. An N-linked (GlcNAc...) asparagine; by host glycan is attached at Asn134. N-linked (GlcNAc...) asparagine; by host glycosylation is found at Asn235 and Asn347. Asn399 is a glycosylation site (N-linked (GlcNAc...) asparagine; by host). Residues 496–516 traverse the membrane as a helical segment; that stretch reads ILILSITLAVLVVLKFFAAIL. A binding to the ribonucleoprotein region spans residues 516–533; the sequence is LHNSSQENRFKIILRKIK. Residues 517–627 are Cytoplasmic-facing; the sequence is HNSSQENRFK…LNLFRYKSRC (111 aa). CCHC-type zinc fingers lie at residues 545 to 565 and 570 to 591; these read CEVC…NLSC and CPYC…YKVC. Binding to the ribonucleoprotein stretches follow at residues 588 to 605, 592 to 603, and 611 to 625; these read YKVC…KKTI, QATHRFRDDLKK, and SPGC…RYKS. The ITAM domain occupies 611 to 634; that stretch reads SPGCYRTLNLFRYKSRCYIFTVWV. Phosphotyrosine is present on residues Tyr615 and Tyr628. The YxxL signature appears at 615–618; it reads YRTL. Residues 628 to 648 traverse the membrane as a helical segment; that stretch reads YIFTVWVTLLIIESIMWAASA. The Lumenal segment spans residues 649–1105; the sequence is SETVLEPSWN…EWITGIFNGN (457 aa). Disulfide bonds link Cys735/Cys770, Cys739/Cys777, Cys751/Cys885, Cys765/Cys896, Cys780/Cys904, Cys806/Cys815, Cys823/Cys832, and Cys863/Cys867. The fusion loop stretch occupies residues 757-777; sequence FEYENNWGCNPADCPGIGTGC. N-linked (GlcNAc...) asparagine; by host glycosylation is present at Asn928. Disulfide bonds link Cys970–Cys1000, Cys993–Cys1045, Cys1010–Cys1015, Cys1046–Cys1051, and Cys1085–Cys1089. The chain crosses the membrane as a helical span at residues 1106–1126; the sequence is WIVIVVLVFFFILSLILLSLL. Residues 1122 to 1135 form a binding to the ribonucleoprotein region; the sequence is LLSLLCPIRKHKRS. Residues 1127-1135 lie on the Cytoplasmic side of the membrane; that stretch reads CPIRKHKRS.

The protein belongs to the hantavirus envelope glycoprotein family. As to quaternary structure, homodimer. Homotetramer; forms heterotetrameric Gn-Gc spikes in the pre-fusion conformation. Interacts (via C-terminus) with the nucleoprotein. Interacts with host TUFM; this interaction contributes to the virus-induced degradation of mitochondria by autophagy, which leads to degradation of host MAVS and inhibition of type I interferon (IFN) responses. Interacts with host MAP1LC3B; this interaction contributes to the virus-induced degradation of mitochondria by autophagy, which leads to degradation of host MAVS and inhibition of type I interferon (IFN) responses. In terms of assembly, homodimer. Homotetramer; forms heterotetrameric Gn-Gc spikes in the pre-fusion conformation. Homotrimer; forms homotrimer in the post-fusion conformation at acidic pH. Interacts (via C-terminus) with the nucleoprotein. In terms of processing, envelope polyprotein precursor is quickly cleaved in vivo just after synthesis, presumably by host signal peptidase.

The protein resides in the virion membrane. Its subcellular location is the host cell surface. The protein localises to the host Golgi apparatus membrane. It is found in the host endoplasmic reticulum membrane. It localises to the host mitochondrion. Its function is as follows. Forms homotetramers with glycoprotein C at the surface of the virion. Attaches the virion to host cell receptors including integrin ITGAV/ITGB3. This attachment induces virion internalization predominantly through clathrin-dependent endocytosis. Mediates the assembly and budding of infectious virus particles through its interaction with the nucleocapsid protein and the viral genome. May dysregulate normal immune and endothelial cell responses through an ITAM motif. Translocates to mitochondria, binds to host TUFM and recruits MAP1LC3B. These interactions induce mitochondrial autophagy and therefore destruction of host MAVS leading to inhibition of type I interferon (IFN) responses. Concomitant breakdown of glycoprotein N is apparently prevented by the nucleoprotein that may inhibit Gn-stimulated autophagosome-lysosome fusion. Interacts with the viral genomic RNA. In terms of biological role, forms homotetramers with glycoprotein N at the surface of the virion. Attaches the virion to host cell receptors including integrin ITGAV/ITGB3. This attachment induces virion internalization predominantly through clathrin-dependent endocytosis. Class II fusion protein that promotes fusion of viral membrane with host endosomal membrane after endocytosis of the virion. The chain is Envelopment polyprotein (GP) from Dobrava-Belgrade orthohantavirus (DOBV).